Consider the following 70-residue polypeptide: DNA gyrase inhibitor YacG (70 aa).

Zn(2+)-binding residues include Cys9, Cys12, Cys28, and Cys32. A disordered region spans residues Glu43–Gln70.

This sequence belongs to the DNA gyrase inhibitor YacG family. As to quaternary structure, interacts with GyrB. Zn(2+) is required as a cofactor.

In terms of biological role, inhibits all the catalytic activities of DNA gyrase by preventing its interaction with DNA. Acts by binding directly to the C-terminal domain of GyrB, which probably disrupts DNA binding by the gyrase. This is DNA gyrase inhibitor YacG from Legionella pneumophila (strain Lens).